The chain runs to 134 residues: Small ribosomal subunit protein uS9 (134 aa).

Residues 109–134 (DARRTEPHKPSKSSKGPRAKRQKSYR) form a disordered region. Residues 118-134 (PSKSSKGPRAKRQKSYR) show a composition bias toward basic residues.

Belongs to the universal ribosomal protein uS9 family.

The protein is Small ribosomal subunit protein uS9 of Methanococcus maripaludis (strain DSM 14266 / JCM 13030 / NBRC 101832 / S2 / LL).